The chain runs to 875 residues: Valine--tRNA ligase (875 aa).

Positions 43–53 (PNVTGVLHMGH) match the 'HIGH' region motif. A 'KMSKS' region motif is present at residues 534 to 538 (KMSKS). Lys537 provides a ligand contact to ATP. Residues 805 to 875 (GNLINTEEEL…LKESIAALKK (71 aa)) adopt a coiled-coil conformation.

It belongs to the class-I aminoacyl-tRNA synthetase family. ValS type 1 subfamily. In terms of assembly, monomer.

Its subcellular location is the cytoplasm. The catalysed reaction is tRNA(Val) + L-valine + ATP = L-valyl-tRNA(Val) + AMP + diphosphate. Catalyzes the attachment of valine to tRNA(Val). As ValRS can inadvertently accommodate and process structurally similar amino acids such as threonine, to avoid such errors, it has a 'posttransfer' editing activity that hydrolyzes mischarged Thr-tRNA(Val) in a tRNA-dependent manner. This Phocaeicola vulgatus (strain ATCC 8482 / DSM 1447 / JCM 5826 / CCUG 4940 / NBRC 14291 / NCTC 11154) (Bacteroides vulgatus) protein is Valine--tRNA ligase.